The sequence spans 473 residues: Phosphatidylserine synthase 1 (473 aa).

The Cytoplasmic segment spans residues 1–35 (MAACVGSRTLSKDDVNYRLHFRMINEQQVEDITLE). Residues 36–56 (FFYRPHTITLLSFTILSLMAF) traverse the membrane as a helical segment. The Lumenal portion of the chain corresponds to 57 to 72 (AFTRDDSVPEENIWRG). The helical transmembrane segment at 73-93 (ILSVIFFFLIISVLAFPNGPF) threads the bilayer. The Cytoplasmic segment spans residues 94–102 (TRPHPAIWR). The chain crosses the membrane as a helical span at residues 103 to 123 (MVFGLSVLYFLFLVFVLFLNF). At 124 to 186 (EQVKAVMYWL…AMKALLIRSY (63 aa)) the chain is on the lumenal side. A helical transmembrane segment spans residues 187 to 207 (GLCWTISITWELTELFFMHLL). Over 208-216 (PNFAECWWD) the chain is Cytoplasmic. A helical transmembrane segment spans residues 217–237 (QVILDILLCNGGGIWLGMVVC). Topologically, residues 238-286 (RFLEMRTYHWASFKDIHTTTGKIKRAVLQFTPASWTYVRWFDPKSSFQR) are lumenal. A helical transmembrane segment spans residues 287 to 307 (VAGIYLFMIIWQLTELNTFFL). Topologically, residues 308 to 319 (KHIFVFQASHPL) are cytoplasmic. A helical transmembrane segment spans residues 320-342 (SWGRILFIGIITAPTVRQYYAYL). Residues 343 to 355 (TDTQCKRVGTQCW) are Lumenal-facing. The helical transmembrane segment at 356–376 (VFGVIAFLEAIVCIKFGQDLF) threads the bilayer. Residues 377-380 (SKTQ) are Cytoplasmic-facing. The chain crosses the membrane as a helical span at residues 381-401 (ILYVVFWLLCVAFTTFLCLYG). The Lumenal portion of the chain corresponds to 402–473 (MVWYAEYYGH…SKVTNGIGKK (72 aa)). Residues 420 to 473 (EDSPYSPDASWLHSKFSKGADNSPPKHPVNSESHSSRRRNRHSRSKVTNGIGKK) form a disordered region. Positions 455–464 (SRRRNRHSRS) are enriched in basic residues.

It belongs to the phosphatidyl serine synthase family.

The protein resides in the endoplasmic reticulum membrane. The catalysed reaction is a 1,2-diacyl-sn-glycero-3-phosphoethanolamine + L-serine = a 1,2-diacyl-sn-glycero-3-phospho-L-serine + ethanolamine. It carries out the reaction a 1,2-diacyl-sn-glycero-3-phosphocholine + L-serine = a 1,2-diacyl-sn-glycero-3-phospho-L-serine + choline. It participates in phospholipid metabolism; phosphatidylserine biosynthesis. Functionally, catalyzes a base-exchange reaction in which the polar head group of phosphatidylethanolamine (PE) or phosphatidylcholine (PC) is replaced by L-serine. Catalyzes mainly the conversion of phosphatidylcholine but also converts, in vitro and to a lesser extent, phosphatidylethanolamine. The protein is Phosphatidylserine synthase 1 (PTDSS1) of Gallus gallus (Chicken).